A 475-amino-acid polypeptide reads, in one-letter code: Aspartyl/glutamyl-tRNA(Asn/Gln) amidotransferase subunit B (475 aa).

The protein belongs to the GatB/GatE family. GatB subfamily. As to quaternary structure, heterotrimer of A, B and C subunits.

It catalyses the reaction L-glutamyl-tRNA(Gln) + L-glutamine + ATP + H2O = L-glutaminyl-tRNA(Gln) + L-glutamate + ADP + phosphate + H(+). The catalysed reaction is L-aspartyl-tRNA(Asn) + L-glutamine + ATP + H2O = L-asparaginyl-tRNA(Asn) + L-glutamate + ADP + phosphate + 2 H(+). Allows the formation of correctly charged Asn-tRNA(Asn) or Gln-tRNA(Gln) through the transamidation of misacylated Asp-tRNA(Asn) or Glu-tRNA(Gln) in organisms which lack either or both of asparaginyl-tRNA or glutaminyl-tRNA synthetases. The reaction takes place in the presence of glutamine and ATP through an activated phospho-Asp-tRNA(Asn) or phospho-Glu-tRNA(Gln). The protein is Aspartyl/glutamyl-tRNA(Asn/Gln) amidotransferase subunit B of Staphylococcus aureus (strain COL).